The following is a 328-amino-acid chain: Nitrilase (328 aa).

The 278-residue stretch at 9 to 286 (VRVAAIQAEP…EGILYANVDV (278 aa)) folds into the CN hydrolase domain. Catalysis depends on Glu49, which acts as the Proton acceptor. Residue Lys131 is part of the active site. Cys166 (nucleophile) is an active-site residue.

It belongs to the carbon-nitrogen hydrolase superfamily. Nitrilase family.

It catalyses the reaction a nitrile + 2 H2O = a carboxylate + NH4(+). Nitrilase that hydrolyzes preferentially 4-cyanopyridine. Is also able to hydrolyze some aliphatic nitriles, such as (R,S)-mandelonitrile. This Penicillium rubens (strain ATCC 28089 / DSM 1075 / NRRL 1951 / Wisconsin 54-1255) (Penicillium chrysogenum) protein is Nitrilase.